Reading from the N-terminus, the 356-residue chain is NAC domain-containing protein JA2L (356 aa).

Positions leucine 14–lysine 162 constitute an NAC domain. The DNA-binding element occupies valine 111–lysine 168. The tract at residues asparagine 163–phenylalanine 191 is disordered. Residues serine 164 to leucine 174 show a composition bias toward polar residues.

Expressed in guard cells of the epidermis.

Its subcellular location is the nucleus. Transcription factor that acts downstream of MYC2 in the jasmonate-mediated response to Botrytis cinerea infection. With MYC2 forms a transcription module that regulates wounding-responsive genes. Involved in jasmonate- and coronatine-mediated stomatal reopening in response to Pseudomonas syringae pv tomato DC3000 infection. Regulates the expression of threonine deaminase 2 (TD2) through promoter binding. In Solanum lycopersicum (Tomato), this protein is NAC domain-containing protein JA2L.